The following is a 246-amino-acid chain: DNA repair protein RecO (246 aa).

The protein belongs to the RecO family.

In terms of biological role, involved in DNA repair and RecF pathway recombination. In Methylobacterium nodulans (strain LMG 21967 / CNCM I-2342 / ORS 2060), this protein is DNA repair protein RecO.